We begin with the raw amino-acid sequence, 336 residues long: Ferredoxin--NADP reductase (336 aa).

T18, E37, Q45, Y50, V92, F127, D290, and S331 together coordinate FAD.

The protein belongs to the ferredoxin--NADP reductase type 2 family. As to quaternary structure, homodimer. FAD is required as a cofactor.

It catalyses the reaction 2 reduced [2Fe-2S]-[ferredoxin] + NADP(+) + H(+) = 2 oxidized [2Fe-2S]-[ferredoxin] + NADPH. This Symbiobacterium thermophilum (strain DSM 24528 / JCM 14929 / IAM 14863 / T) protein is Ferredoxin--NADP reductase.